Consider the following 474-residue polypeptide: Aspartate ammonia-lyase (474 aa).

Residues Thr105, Ser144, Thr145, Asn146, and Thr191 each contribute to the L-aspartate site. Residues 322–331 (GSSIMPGKVN) are SS loop. Ser323 serves as the catalytic Proton acceptor. Residues Ser324 and Lys329 each coordinate L-aspartate.

It belongs to the class-II fumarase/aspartase family. Aspartase subfamily. Homotetramer.

It carries out the reaction L-aspartate = fumarate + NH4(+). It catalyses the reaction L-phenylalanine = (E)-cinnamate + NH4(+). Its activity is regulated as follows. Does not require any divalent metal ion for activation of catalysis, but the activity is slightly increased in the presence of Mg(2+), Mn(2+), Ca(2+) or Co(2+). In terms of biological role, catalyzes the reversible conversion of L-aspartate to fumarate and ammonia. Can also utilize L-phenylalanine to form cinnamic acid. Exhibits the highest specific activity towards L-phenylalanine, but catalytic efficiency is 3-fold higher with L-aspartate. This Pseudomonas aeruginosa (strain ATCC 15692 / DSM 22644 / CIP 104116 / JCM 14847 / LMG 12228 / 1C / PRS 101 / PAO1) protein is Aspartate ammonia-lyase.